Consider the following 264-residue polypeptide: Teichoic acids export ATP-binding protein TagH (264 aa).

The ABC transporter domain occupies 24–243 (IKDALIPKNK…YEQFLKDFKK (220 aa)). 57–64 (GINGSGKS) contacts ATP.

The protein belongs to the ABC transporter superfamily. Teichoic acids exporter (TC 3.A.1.104.1) family. As to quaternary structure, the complex is composed of two ATP-binding proteins (TagH) and two transmembrane proteins (TagG).

The protein localises to the cell membrane. The enzyme catalyses ATP + H2O + teichoic acidSide 1 = ADP + phosphate + teichoic acidSide 2.. In terms of biological role, part of the ABC transporter complex TagGH involved in teichoic acids export. Responsible for energy coupling to the transport system. This Staphylococcus haemolyticus (strain JCSC1435) protein is Teichoic acids export ATP-binding protein TagH.